Consider the following 279-residue polypeptide: DegV domain-containing protein lmo1863 (279 aa).

Residues 4–278 (IKIITDSTAG…TGAFAFMYYT (275 aa)) form the DegV domain. Residues S62 and S94 each coordinate hexadecanoate.

Its function is as follows. May bind long-chain fatty acids, such as palmitate, and may play a role in lipid transport or fatty acid metabolism. The chain is DegV domain-containing protein lmo1863 from Listeria monocytogenes serovar 1/2a (strain ATCC BAA-679 / EGD-e).